A 446-amino-acid chain; its full sequence is Methionine aminopeptidase 2-1 (446 aa).

The segment at 1-88 is disordered; that stretch reads MAAQVTPELA…PPRVILSSIF (88 aa). Residues 32 to 44 show a composition bias toward acidic residues; that stretch reads ENEDVESDDDNEG. Positions 57 to 72 are enriched in basic residues; it reads AKKKKKKKPKKKKKGG. Histidine 196 is a binding site for substrate. Positions 216, 227, and 296 each coordinate a divalent metal cation. Histidine 304 contacts substrate. Glutamate 332 and glutamate 427 together coordinate a divalent metal cation.

This sequence belongs to the peptidase M24A family. Methionine aminopeptidase eukaryotic type 2 subfamily. Requires Co(2+) as cofactor. It depends on Zn(2+) as a cofactor. The cofactor is Mn(2+). Fe(2+) serves as cofactor.

Its subcellular location is the cytoplasm. The catalysed reaction is Release of N-terminal amino acids, preferentially methionine, from peptides and arylamides.. Functionally, cotranslationally removes the N-terminal methionine from nascent proteins. The N-terminal methionine is often cleaved when the second residue in the primary sequence is small and uncharged (Met-Ala-, Cys, Gly, Pro, Ser, Thr, or Val). In Blastomyces gilchristii (strain SLH14081) (Blastomyces dermatitidis), this protein is Methionine aminopeptidase 2-1.